A 451-amino-acid chain; its full sequence is tRNA modification GTPase MnmE (451 aa).

The (6S)-5-formyl-5,6,7,8-tetrahydrofolate site is built by Arg25, Glu82, and Lys121. The TrmE-type G domain maps to Gly217–Gly374. Asn227 lines the K(+) pocket. Residues Asn227–Ser232, Thr246–Thr252, and Asp271–Gly274 each bind GTP. Ser231 provides a ligand contact to Mg(2+). Positions 246, 248, and 251 each coordinate K(+). Mg(2+) is bound at residue Thr252. Residue Lys451 participates in (6S)-5-formyl-5,6,7,8-tetrahydrofolate binding.

The protein belongs to the TRAFAC class TrmE-Era-EngA-EngB-Septin-like GTPase superfamily. TrmE GTPase family. In terms of assembly, homodimer. Heterotetramer of two MnmE and two MnmG subunits. K(+) is required as a cofactor.

The protein localises to the cytoplasm. Exhibits a very high intrinsic GTPase hydrolysis rate. Involved in the addition of a carboxymethylaminomethyl (cmnm) group at the wobble position (U34) of certain tRNAs, forming tRNA-cmnm(5)s(2)U34. This Hydrogenovibrio crunogenus (strain DSM 25203 / XCL-2) (Thiomicrospira crunogena) protein is tRNA modification GTPase MnmE.